The primary structure comprises 585 residues: Cyclic nucleotide-binding domain-containing protein 2 (585 aa).

116–239 contacts a nucleoside 3',5'-cyclic phosphate; it reads SYRNYAEPLQ…DAQYRFEFFR (124 aa).

It localises to the cytoplasm. The protein localises to the cytosol. In terms of biological role, essential for male fertility. Plays an important role in spermatogenesis and regulates sperm motility by controlling the development of the flagellar bending of sperm. This Macaca fascicularis (Crab-eating macaque) protein is Cyclic nucleotide-binding domain-containing protein 2 (CNBD2).